The chain runs to 977 residues: Alanine--tRNA ligase (977 aa).

The interval 512 to 535 (SQVDSKLQSSTPAGTGSYDSKQVS) is disordered. Zn(2+)-binding residues include His-618, His-622, Cys-720, and His-724.

Belongs to the class-II aminoacyl-tRNA synthetase family. It depends on Zn(2+) as a cofactor.

It localises to the cytoplasm. It carries out the reaction tRNA(Ala) + L-alanine + ATP = L-alanyl-tRNA(Ala) + AMP + diphosphate. Its function is as follows. Catalyzes the attachment of alanine to tRNA(Ala) in a two-step reaction: alanine is first activated by ATP to form Ala-AMP and then transferred to the acceptor end of tRNA(Ala). Also edits incorrectly charged Ser-tRNA(Ala) and Gly-tRNA(Ala) via its editing domain. This is Alanine--tRNA ligase from Leptospira interrogans serogroup Icterohaemorrhagiae serovar copenhageni (strain Fiocruz L1-130).